The following is a 350-amino-acid chain: Twinfilin-1 (350 aa).

At Ser2 the chain carries N-acetylserine. One can recognise an ADF-H 1 domain in the interval 2-139 (SHQTGIQASE…SLHGYKKYLL (138 aa)). 2 positions are modified to phosphoserine: Ser143 and Ser277. An ADF-H 2 domain is found at 175–313 (LQGVAFPISR…TADFLYEEVH (139 aa)). Position 309 is a phosphotyrosine (Tyr309). Residues 316 to 350 (QHAHKQSFAKPKGPAGKRGIRRLIRGPAETEATTD) are disordered. The residue at position 349 (Thr349) is a Phosphothreonine.

This sequence belongs to the actin-binding proteins ADF family. Twinfilin subfamily. In terms of assembly, interacts with G-actin; ADP-actin form and capping protein (CP). May also be able to interact with TWF2 and phosphoinositides, PI(4,5)P2. When bound to PI(4,5)P2, it is down-regulated. Interacts with ACTG1. In terms of processing, phosphorylated on serine and threonine residues. Expressed at high levels in the colon, testis, ovary, prostate and lung. Expressed at lower levels in the brain, bladder and heart. Not detected in liver.

It localises to the cytoplasm. It is found in the cytoskeleton. Its function is as follows. Actin-binding protein involved in motile and morphological processes. Inhibits actin polymerization, likely by sequestering G-actin. By capping the barbed ends of filaments, it also regulates motility. Seems to play an important role in clathrin-mediated endocytosis and distribution of endocytic organelles. This Homo sapiens (Human) protein is Twinfilin-1 (TWF1).